A 420-amino-acid chain; its full sequence is Gamma-glutamyl phosphate reductase (420 aa).

It belongs to the gamma-glutamyl phosphate reductase family.

The protein localises to the cytoplasm. The enzyme catalyses L-glutamate 5-semialdehyde + phosphate + NADP(+) = L-glutamyl 5-phosphate + NADPH + H(+). The protein operates within amino-acid biosynthesis; L-proline biosynthesis; L-glutamate 5-semialdehyde from L-glutamate: step 2/2. Catalyzes the NADPH-dependent reduction of L-glutamate 5-phosphate into L-glutamate 5-semialdehyde and phosphate. The product spontaneously undergoes cyclization to form 1-pyrroline-5-carboxylate. The protein is Gamma-glutamyl phosphate reductase of Cereibacter sphaeroides (strain ATCC 17023 / DSM 158 / JCM 6121 / CCUG 31486 / LMG 2827 / NBRC 12203 / NCIMB 8253 / ATH 2.4.1.) (Rhodobacter sphaeroides).